The following is a 472-amino-acid chain: NADH-quinone oxidoreductase subunit N (472 aa).

The next 14 helical transmembrane spans lie at 11–31 (AELS…FLPA), 43–63 (ILLT…LFGG), 67–87 (STPM…LVFL), 103–123 (GEFY…VSAG), 125–145 (FLLF…LVAF), 159–179 (FILS…MIYG), 200–220 (VLAL…VPFH), 234–254 (VSAY…MIIL), 265–285 (WSEI…LFAI), 293–313 (FMAF…LAGT), 318–338 (ASLV…FGVI), 362–384 (PKLT…FAGF), 401–421 (LIVF…LLIV), and 446–466 (LLVC…YQLL).

The protein belongs to the complex I subunit 2 family. NDH-1 is composed of 14 different subunits. Subunits NuoA, H, J, K, L, M, N constitute the membrane sector of the complex.

The protein resides in the cell inner membrane. The enzyme catalyses a quinone + NADH + 5 H(+)(in) = a quinol + NAD(+) + 4 H(+)(out). Its function is as follows. NDH-1 shuttles electrons from NADH, via FMN and iron-sulfur (Fe-S) centers, to quinones in the respiratory chain. The immediate electron acceptor for the enzyme in this species is believed to be a menaquinone. Couples the redox reaction to proton translocation (for every two electrons transferred, four hydrogen ions are translocated across the cytoplasmic membrane), and thus conserves the redox energy in a proton gradient. The polypeptide is NADH-quinone oxidoreductase subunit N (Phocaeicola vulgatus (strain ATCC 8482 / DSM 1447 / JCM 5826 / CCUG 4940 / NBRC 14291 / NCTC 11154) (Bacteroides vulgatus)).